A 120-amino-acid chain; its full sequence is Large ribosomal subunit protein uL18 (120 aa).

It belongs to the universal ribosomal protein uL18 family. In terms of assembly, part of the 50S ribosomal subunit; part of the 5S rRNA/L5/L18/L25 subcomplex. Contacts the 5S and 23S rRNAs.

This is one of the proteins that bind and probably mediate the attachment of the 5S RNA into the large ribosomal subunit, where it forms part of the central protuberance. This chain is Large ribosomal subunit protein uL18, found in Rhizobium rhizogenes (strain K84 / ATCC BAA-868) (Agrobacterium radiobacter).